A 102-amino-acid chain; its full sequence is RNA-binding protein Hfq (102 aa).

The 60-residue stretch at aspartate 9–valine 68 folds into the Sm domain. Positions valine 63 to glutamate 102 are disordered. A compositionally biased stretch (low complexity) spans histidine 70–glycine 86.

It belongs to the Hfq family. Homohexamer.

In terms of biological role, RNA chaperone that binds small regulatory RNA (sRNAs) and mRNAs to facilitate mRNA translational regulation in response to envelope stress, environmental stress and changes in metabolite concentrations. Also binds with high specificity to tRNAs. The protein is RNA-binding protein Hfq of Klebsiella pneumoniae (strain 342).